The primary structure comprises 574 residues: Pyruvate kinase PKLR (574 aa).

Residues S2, S19, S26, and S43 each carry the phosphoserine modification. R116 is a substrate binding site. K(+)-binding residues include N118, S120, D156, and T157. An ATP-binding site is contributed by 118-121 (NFSH). ATP contacts are provided by R163 and K250. At S292 the chain carries Phosphoserine. K313 contributes to the substrate binding site. E315 lines the Mn(2+) pocket. Residues G338, D339, and T371 each contribute to the substrate site. Residue D339 coordinates Mn(2+). Beta-D-fructose 1,6-bisphosphate-binding positions include 475–480 (TTTGRS), W525, R532, and 559–564 (RPGSGY).

This sequence belongs to the pyruvate kinase family. Homotetramer. Mg(2+) serves as cofactor. It depends on Mn(2+) as a cofactor. K(+) is required as a cofactor.

The catalysed reaction is pyruvate + ATP = phosphoenolpyruvate + ADP + H(+). Its pathway is carbohydrate degradation; glycolysis; pyruvate from D-glyceraldehyde 3-phosphate: step 5/5. Allosterically activated by fructose 1,6-bisphosphate. Functionally, pyruvate kinase that catalyzes the conversion of phosphoenolpyruvate to pyruvate with the synthesis of ATP, and which plays a key role in glycolysis. This chain is Pyruvate kinase PKLR (PKLR), found in Homo sapiens (Human).